The sequence spans 555 residues: Phosphomethylpyrimidine synthase (555 aa).

Residues 78-104 are disordered; the sequence is VRDRWGFDNGSAESTKGELSMSERKPR. Residues asparagine 191, methionine 220, tyrosine 249, histidine 285, 305–307, 346–349, and glutamate 385 contribute to the substrate site; these read SRG and DALR. Residue histidine 389 participates in Zn(2+) binding. Tyrosine 412 contacts substrate. A Zn(2+)-binding site is contributed by histidine 453. The [4Fe-4S] cluster site is built by cysteine 535, cysteine 538, and cysteine 543.

This sequence belongs to the ThiC family. [4Fe-4S] cluster serves as cofactor.

It carries out the reaction 5-amino-1-(5-phospho-beta-D-ribosyl)imidazole + S-adenosyl-L-methionine = 4-amino-2-methyl-5-(phosphooxymethyl)pyrimidine + CO + 5'-deoxyadenosine + formate + L-methionine + 3 H(+). It functions in the pathway cofactor biosynthesis; thiamine diphosphate biosynthesis. Its function is as follows. Catalyzes the synthesis of the hydroxymethylpyrimidine phosphate (HMP-P) moiety of thiamine from aminoimidazole ribotide (AIR) in a radical S-adenosyl-L-methionine (SAM)-dependent reaction. The chain is Phosphomethylpyrimidine synthase from Chlorobaculum parvum (strain DSM 263 / NCIMB 8327) (Chlorobium vibrioforme subsp. thiosulfatophilum).